A 207-amino-acid polypeptide reads, in one-letter code: Octanoyltransferase (207 aa).

Positions 29–204 (DDTADELWLV…ELMVQLGDEE (176 aa)) constitute a BPL/LPL catalytic domain. Substrate-binding positions include 68–75 (RGGQVTYH), 135–137 (SLG), and 148–150 (GVA). Residue Cys-166 is the Acyl-thioester intermediate of the active site.

Belongs to the LipB family.

The protein localises to the cytoplasm. The enzyme catalyses octanoyl-[ACP] + L-lysyl-[protein] = N(6)-octanoyl-L-lysyl-[protein] + holo-[ACP] + H(+). It functions in the pathway protein modification; protein lipoylation via endogenous pathway; protein N(6)-(lipoyl)lysine from octanoyl-[acyl-carrier-protein]: step 1/2. Catalyzes the transfer of endogenously produced octanoic acid from octanoyl-acyl-carrier-protein onto the lipoyl domains of lipoate-dependent enzymes. Lipoyl-ACP can also act as a substrate although octanoyl-ACP is likely to be the physiological substrate. The protein is Octanoyltransferase of Methylococcus capsulatus (strain ATCC 33009 / NCIMB 11132 / Bath).